A 1099-amino-acid polypeptide reads, in one-letter code: Carbamoyl phosphate synthase large chain (1099 aa).

Residues 1–402 (MPRREDIKRI…ALGKALRSLE (402 aa)) form a carboxyphosphate synthetic domain region. ATP-binding residues include Arg-129, Arg-169, Gly-175, Gly-176, Glu-208, Val-210, Glu-215, Gly-241, Ile-242, His-243, Gln-285, and Glu-299. Residues 133 to 328 (KKTMEEAGLE…IAKIAALLAV (196 aa)) enclose the ATP-grasp 1 domain. Positions 285, 299, and 301 each coordinate Mg(2+). 3 residues coordinate Mn(2+): Gln-285, Glu-299, and Asn-301. Positions 403-541 (LDAAPKLDLD…STYNGVENEA (139 aa)) are oligomerization domain. A carbamoyl phosphate synthetic domain region spans residues 542-944 (IPTDKEKIMI…AFAKAEIAAG (403 aa)). The 192-residue stretch at 666–857 (AKLLKRIGLR…VAKIAAKIMV (192 aa)) folds into the ATP-grasp 2 domain. Arg-702, Lys-741, Leu-743, Glu-748, Gly-773, Val-774, His-775, Ser-776, Gln-816, and Glu-828 together coordinate ATP. 3 residues coordinate Mg(2+): Gln-816, Glu-828, and Asn-830. Mn(2+) is bound by residues Gln-816, Glu-828, and Asn-830. The MGS-like domain occupies 945–1099 (NPLPTEGAIL…VRKLTDTWKM (155 aa)). The tract at residues 945–1099 (NPLPTEGAIL…VRKLTDTWKM (155 aa)) is allosteric domain.

The protein belongs to the CarB family. In terms of assembly, composed of two chains; the small (or glutamine) chain promotes the hydrolysis of glutamine to ammonia, which is used by the large (or ammonia) chain to synthesize carbamoyl phosphate. Tetramer of heterodimers (alpha,beta)4. Mg(2+) serves as cofactor. The cofactor is Mn(2+).

The catalysed reaction is hydrogencarbonate + L-glutamine + 2 ATP + H2O = carbamoyl phosphate + L-glutamate + 2 ADP + phosphate + 2 H(+). The enzyme catalyses hydrogencarbonate + NH4(+) + 2 ATP = carbamoyl phosphate + 2 ADP + phosphate + 2 H(+). It participates in amino-acid biosynthesis; L-arginine biosynthesis; carbamoyl phosphate from bicarbonate: step 1/1. It functions in the pathway pyrimidine metabolism; UMP biosynthesis via de novo pathway; (S)-dihydroorotate from bicarbonate: step 1/3. Large subunit of the glutamine-dependent carbamoyl phosphate synthetase (CPSase). CPSase catalyzes the formation of carbamoyl phosphate from the ammonia moiety of glutamine, carbonate, and phosphate donated by ATP, constituting the first step of 2 biosynthetic pathways, one leading to arginine and/or urea and the other to pyrimidine nucleotides. The large subunit (synthetase) binds the substrates ammonia (free or transferred from glutamine from the small subunit), hydrogencarbonate and ATP and carries out an ATP-coupled ligase reaction, activating hydrogencarbonate by forming carboxy phosphate which reacts with ammonia to form carbamoyl phosphate. This chain is Carbamoyl phosphate synthase large chain, found in Thermotoga neapolitana (strain ATCC 49049 / DSM 4359 / NBRC 107923 / NS-E).